Consider the following 221-residue polypeptide: UPF0319 protein CGSHiEE_03630 (221 aa).

The first 21 residues, M1–A21, serve as a signal peptide directing secretion.

Belongs to the UPF0319 family.

The chain is UPF0319 protein CGSHiEE_03630 from Haemophilus influenzae (strain PittEE).